A 209-amino-acid chain; its full sequence is Orotate phosphoribosyltransferase (209 aa).

5-phospho-alpha-D-ribose 1-diphosphate contacts are provided by residues arginine 96, lysine 100, histidine 102, and 122-130; that span reads EDLISTGGS. Serine 126 contributes to the orotate binding site.

This sequence belongs to the purine/pyrimidine phosphoribosyltransferase family. PyrE subfamily. In terms of assembly, homodimer. Mg(2+) serves as cofactor.

The enzyme catalyses orotidine 5'-phosphate + diphosphate = orotate + 5-phospho-alpha-D-ribose 1-diphosphate. It functions in the pathway pyrimidine metabolism; UMP biosynthesis via de novo pathway; UMP from orotate: step 1/2. Catalyzes the transfer of a ribosyl phosphate group from 5-phosphoribose 1-diphosphate to orotate, leading to the formation of orotidine monophosphate (OMP). The chain is Orotate phosphoribosyltransferase from Streptococcus thermophilus (strain ATCC BAA-491 / LMD-9).